The chain runs to 302 residues: Lipoyl synthase (302 aa).

7 residues coordinate [4Fe-4S] cluster: C44, C49, C55, C70, C74, C77, and S283. A Radical SAM core domain is found at 56–272; sequence WSKKHATVMI…AKVARSKGFL (217 aa).

This sequence belongs to the radical SAM superfamily. Lipoyl synthase family. It depends on [4Fe-4S] cluster as a cofactor.

The protein resides in the cytoplasm. It catalyses the reaction [[Fe-S] cluster scaffold protein carrying a second [4Fe-4S](2+) cluster] + N(6)-octanoyl-L-lysyl-[protein] + 2 oxidized [2Fe-2S]-[ferredoxin] + 2 S-adenosyl-L-methionine + 4 H(+) = [[Fe-S] cluster scaffold protein] + N(6)-[(R)-dihydrolipoyl]-L-lysyl-[protein] + 4 Fe(3+) + 2 hydrogen sulfide + 2 5'-deoxyadenosine + 2 L-methionine + 2 reduced [2Fe-2S]-[ferredoxin]. It participates in protein modification; protein lipoylation via endogenous pathway; protein N(6)-(lipoyl)lysine from octanoyl-[acyl-carrier-protein]: step 2/2. Its function is as follows. Catalyzes the radical-mediated insertion of two sulfur atoms into the C-6 and C-8 positions of the octanoyl moiety bound to the lipoyl domains of lipoate-dependent enzymes, thereby converting the octanoylated domains into lipoylated derivatives. This is Lipoyl synthase from Orientia tsutsugamushi (strain Boryong) (Rickettsia tsutsugamushi).